Here is a 147-residue protein sequence, read N- to C-terminus: Myosin-ID light chain (147 aa).

EF-hand domains lie at 8–43 (EAQS…LGQN), 79–114 (FDEK…LGER), and 115–147 (LPEE…MLKK). The Ca(2+) site is built by D21, N23, D25, K27, and E32.

As to quaternary structure, myosin I is a dimer of a heavy and a light chain. Inability to self-assemble into filaments. Interacts with myoD. Does not interact with myoB or myoC.

The protein resides in the cytoplasm. In terms of biological role, functions as the light chain for myosin-D. Has low affinity for calcium. The chain is Myosin-ID light chain (mlcD) from Dictyostelium discoideum (Social amoeba).